The following is a 599-amino-acid chain: Tryptophan 2-C-methyltransferase (599 aa).

Positions 4–149 (KGTVALINPN…RALAEGRSAD (146 aa)) constitute a B12-binding domain. Positions 167 to 197 (RVAPPALDPRAAPAPSSSPSPSPAPSSSSAP) are disordered. The segment covering 168–181 (VAPPALDPRAAPAP) has biased composition (low complexity). In terms of domain architecture, Radical SAM core spans 239-492 (YREGGLGSIL…IEYERQFMFD (254 aa)). 3 residues coordinate [4Fe-4S] cluster: cysteine 253, cysteine 257, and cysteine 260.

The cofactor is [4Fe-4S] cluster. Cob(II)alamin is required as a cofactor.

The catalysed reaction is L-tryptophan + S-adenosyl-L-methionine = 2-methyl-L-tryptophan + S-adenosyl-L-homocysteine + H(+). Functionally, involved in the biosynthetic pathway of the antibiotic thiostrepton A. First, TsrM catalyzes the transfer of a methyl group from S-adenosyl methionine (SAM) to cobalamin, leading to the formation of methylcobalamin (CH3-cobalamin) and S-adenosyl-L-homocysteine (SAH). Then the methyl group is transferred to the C2 position of tryptophan (Trp) with the concerted action of the radical SAM [4Fe-4S] center, leading to the production of methyltryptophan. This Streptomyces laurentii protein is Tryptophan 2-C-methyltransferase.